The chain runs to 352 residues: Photosystem II D2 protein (352 aa).

The chain crosses the membrane as a helical span at residues 40–60; it reads CAYLALGGWLTGTTFVTSWYT. Histidine 117 is a binding site for chlorophyll a. The helical transmembrane segment at 124 to 140 threads the bilayer; it reads GFMLRQFEIAQSVRLRP. Pheophytin a contacts are provided by glutamine 129 and asparagine 142. The helical transmembrane segment at 152-165 threads the bilayer; the sequence is VFVSVFLIYPLGQS. Histidine 197 contacts chlorophyll a. A helical transmembrane segment spans residues 207–227; it reads AALLCAIHGATVENTLFEDGD. Residues histidine 214 and phenylalanine 261 each coordinate a plastoquinone. Histidine 214 lines the Fe cation pocket. Histidine 268 contributes to the Fe cation binding site. Residues 278–294 form a helical membrane-spanning segment; the sequence is GLWMSALGVVGLALNLR.

The protein belongs to the reaction center PufL/M/PsbA/D family. PSII is composed of 1 copy each of membrane proteins PsbA, PsbB, PsbC, PsbD, PsbE, PsbF, PsbH, PsbI, PsbJ, PsbK, PsbL, PsbM, PsbT, PsbY, PsbZ, Psb30/Ycf12, at least 3 peripheral proteins of the oxygen-evolving complex and a large number of cofactors. It forms dimeric complexes. The D1/D2 heterodimer binds P680, chlorophylls that are the primary electron donor of PSII, and subsequent electron acceptors. It shares a non-heme iron and each subunit binds pheophytin, quinone, additional chlorophylls, carotenoids and lipids. There is also a Cl(-1) ion associated with D1 and D2, which is required for oxygen evolution. The PSII complex binds additional chlorophylls, carotenoids and specific lipids. is required as a cofactor.

Its subcellular location is the plastid. It is found in the chloroplast thylakoid membrane. The catalysed reaction is 2 a plastoquinone + 4 hnu + 2 H2O = 2 a plastoquinol + O2. In terms of biological role, photosystem II (PSII) is a light-driven water:plastoquinone oxidoreductase that uses light energy to abstract electrons from H(2)O, generating O(2) and a proton gradient subsequently used for ATP formation. It consists of a core antenna complex that captures photons, and an electron transfer chain that converts photonic excitation into a charge separation. The D1/D2 (PsbA/PsbD) reaction center heterodimer binds P680, the primary electron donor of PSII as well as several subsequent electron acceptors. D2 is needed for assembly of a stable PSII complex. This is Photosystem II D2 protein from Bigelowiella natans (Pedinomonas minutissima).